Consider the following 108-residue polypeptide: UPF0060 membrane protein sll0793 (108 aa).

Transmembrane regions (helical) follow at residues 7–27 (LYFV…WLWI), 32–52 (SVWL…VATL), 64–84 (YGGI…NVVV), and 86–106 (RLDW…MYAN).

This sequence belongs to the UPF0060 family.

It localises to the cell inner membrane. This chain is UPF0060 membrane protein sll0793, found in Synechocystis sp. (strain ATCC 27184 / PCC 6803 / Kazusa).